Here is a 131-residue protein sequence, read N- to C-terminus: Large ribosomal subunit protein eL32 (131 aa).

A disordered region spans residues 39-77 (LGEKWRRPKGRHSKMRRKLKSKPKMPNPGYGSPKKVRGL). Residues 44-61 (RRPKGRHSKMRRKLKSKP) are compositionally biased toward basic residues.

The protein belongs to the eukaryotic ribosomal protein eL32 family.

The polypeptide is Large ribosomal subunit protein eL32 (rpl32) (Methanopyrus kandleri (strain AV19 / DSM 6324 / JCM 9639 / NBRC 100938)).